The sequence spans 147 residues: UPF0735 ACT domain-containing protein GK2605 (147 aa).

The region spanning 69–144 is the ACT domain; sequence TLFFHLEDRS…FVEKVEIVGS (76 aa).

It belongs to the UPF0735 family.

The sequence is that of UPF0735 ACT domain-containing protein GK2605 from Geobacillus kaustophilus (strain HTA426).